The primary structure comprises 183 residues: Nucleoside diphosphate kinase (183 aa).

Position 11 (K11) interacts with ATP. The insert stretch occupies residues 56-88; sequence EWLRSAGQKLLKAYQELGIDPRAKIGTDDPVEV. Residues R120, T126, R137, and N157 each coordinate ATP. The active-site Pros-phosphohistidine intermediate is H160.

Belongs to the NDK family. Requires Mg(2+) as cofactor.

The protein resides in the cytoplasm. The catalysed reaction is a 2'-deoxyribonucleoside 5'-diphosphate + ATP = a 2'-deoxyribonucleoside 5'-triphosphate + ADP. The enzyme catalyses a ribonucleoside 5'-diphosphate + ATP = a ribonucleoside 5'-triphosphate + ADP. Functionally, major role in the synthesis of nucleoside triphosphates other than ATP. The ATP gamma phosphate is transferred to the NDP beta phosphate via a ping-pong mechanism, using a phosphorylated active-site intermediate. In Pyrobaculum aerophilum (strain ATCC 51768 / DSM 7523 / JCM 9630 / CIP 104966 / NBRC 100827 / IM2), this protein is Nucleoside diphosphate kinase (ndk).